A 339-amino-acid polypeptide reads, in one-letter code: Protein-glutamate methylesterase/protein-glutamine glutaminase 3 (339 aa).

The Response regulatory domain maps to 2–119 (NIGIVNDLPL…GLSTDASPQA (118 aa)). The residue at position 53 (Asp53) is a 4-aspartylphosphate. The CheB-type methylesterase domain occupies 141 to 336 (PGPAPTRGQP…PQLIARIALT (196 aa)). Residues Ser158, His185, and Asp278 contribute to the active site.

The protein belongs to the CheB family. Post-translationally, phosphorylated by CheA. Phosphorylation of the N-terminal regulatory domain activates the methylesterase activity.

The protein localises to the cytoplasm. The catalysed reaction is [protein]-L-glutamate 5-O-methyl ester + H2O = L-glutamyl-[protein] + methanol + H(+). It carries out the reaction L-glutaminyl-[protein] + H2O = L-glutamyl-[protein] + NH4(+). Functionally, involved in chemotaxis. Part of a chemotaxis signal transduction system that modulates chemotaxis in response to various stimuli. Catalyzes the demethylation of specific methylglutamate residues introduced into the chemoreceptors (methyl-accepting chemotaxis proteins or MCP) by CheR. Also mediates the irreversible deamidation of specific glutamine residues to glutamic acid. This chain is Protein-glutamate methylesterase/protein-glutamine glutaminase 3, found in Burkholderia orbicola (strain AU 1054).